A 243-amino-acid polypeptide reads, in one-letter code: Small ribosomal subunit protein uS3 (243 aa).

Positions 39-110 (IRVFIQKKYG…QVRINVVEIE (72 aa)) constitute a KH type-2 domain. Residues 216 to 243 (QPLPVGASPRRKGNRRPQQFEDRSNDGK) form a disordered region. Residues 233–243 (QQFEDRSNDGK) show a composition bias toward basic and acidic residues.

Belongs to the universal ribosomal protein uS3 family. In terms of assembly, part of the 30S ribosomal subunit. Forms a tight complex with proteins S10 and S14.

In terms of biological role, binds the lower part of the 30S subunit head. Binds mRNA in the 70S ribosome, positioning it for translation. The polypeptide is Small ribosomal subunit protein uS3 (Prochlorococcus marinus (strain SARG / CCMP1375 / SS120)).